A 335-amino-acid chain; its full sequence is Nucleoid-associated protein KPN78578_25800 (335 aa).

Belongs to the YejK family.

The protein localises to the cytoplasm. The protein resides in the nucleoid. The polypeptide is Nucleoid-associated protein KPN78578_25800 (Klebsiella pneumoniae subsp. pneumoniae (strain ATCC 700721 / MGH 78578)).